The primary structure comprises 362 residues: Oxygen-dependent coproporphyrinogen-III oxidase (362 aa).

Serine 118 lines the substrate pocket. The a divalent metal cation site is built by histidine 122 and histidine 132. The active-site Proton donor is the histidine 132. 134 to 136 (NYR) serves as a coordination point for substrate. 2 residues coordinate a divalent metal cation: histidine 166 and histidine 196. An important for dimerization region spans residues 286–321 (YVEFNLVWDRGTIFGLQTNGRTESILMSLPPLVRWE).

This sequence belongs to the aerobic coproporphyrinogen-III oxidase family. Homodimer. Requires a divalent metal cation as cofactor.

The protein localises to the cytoplasm. It catalyses the reaction coproporphyrinogen III + O2 + 2 H(+) = protoporphyrinogen IX + 2 CO2 + 2 H2O. It functions in the pathway porphyrin-containing compound metabolism; protoporphyrin-IX biosynthesis; protoporphyrinogen-IX from coproporphyrinogen-III (O2 route): step 1/1. In terms of biological role, involved in the heme and chlorophyll biosynthesis. Catalyzes the aerobic oxidative decarboxylation of propionate groups of rings A and B of coproporphyrinogen-III to yield the vinyl groups in protoporphyrinogen-IX. This Synechococcus sp. (strain CC9605) protein is Oxygen-dependent coproporphyrinogen-III oxidase.